Consider the following 1824-residue polypeptide: E3 ubiquitin-protein ligase UBR1 (1824 aa).

The UBR-type zinc-finger motif lies at 107–178; it reads TVCGKVFKNG…KDQYCELHLA (72 aa). Disordered stretches follow at residues 1006 to 1043 and 1073 to 1093; these read KQAP…ENRA and ADTE…DWED. Residues 1033 to 1043 show a composition bias toward basic and acidic residues; the sequence is EQAREERENRA. The RING-type; atypical zinc finger occupies 1126-1220; the sequence is FKCILCFENC…VEFQCPYCRT (95 aa).

This sequence belongs to the E3 ubiquitin-protein ligase UBR1-like family.

The catalysed reaction is S-ubiquitinyl-[E2 ubiquitin-conjugating enzyme]-L-cysteine + [acceptor protein]-L-lysine = [E2 ubiquitin-conjugating enzyme]-L-cysteine + N(6)-ubiquitinyl-[acceptor protein]-L-lysine.. The protein operates within protein modification; protein ubiquitination. In terms of biological role, E3 ubiquitin-protein ligase which is a component of the N-end rule pathway. Recognizes and binds to proteins bearing specific N-terminal residues that are destabilizing according to the N-end rule, leading to their ubiquitination and subsequent degradation. The polypeptide is E3 ubiquitin-protein ligase UBR1 (Drosophila melanogaster (Fruit fly)).